We begin with the raw amino-acid sequence, 376 residues long: 23S rRNA (uracil(747)-C(5))-methyltransferase RlmC (376 aa).

C3, C11, C14, and C87 together coordinate [4Fe-4S] cluster. Q212, F241, E262, and N307 together coordinate S-adenosyl-L-methionine. Catalysis depends on C334, which acts as the Nucleophile.

The protein belongs to the class I-like SAM-binding methyltransferase superfamily. RNA M5U methyltransferase family. RlmC subfamily.

It carries out the reaction uridine(747) in 23S rRNA + S-adenosyl-L-methionine = 5-methyluridine(747) in 23S rRNA + S-adenosyl-L-homocysteine + H(+). Its function is as follows. Catalyzes the formation of 5-methyl-uridine at position 747 (m5U747) in 23S rRNA. The sequence is that of 23S rRNA (uracil(747)-C(5))-methyltransferase RlmC from Salmonella choleraesuis (strain SC-B67).